Here is a 454-residue protein sequence, read N- to C-terminus: Phosphoglucosamine mutase (454 aa).

S101 serves as the catalytic Phosphoserine intermediate. Positions 101, 243, 245, and 247 each coordinate Mg(2+). S101 bears the Phosphoserine mark.

The protein belongs to the phosphohexose mutase family. Requires Mg(2+) as cofactor. Post-translationally, activated by phosphorylation.

The catalysed reaction is alpha-D-glucosamine 1-phosphate = D-glucosamine 6-phosphate. Its function is as follows. Catalyzes the conversion of glucosamine-6-phosphate to glucosamine-1-phosphate. The sequence is that of Phosphoglucosamine mutase from Geotalea daltonii (strain DSM 22248 / JCM 15807 / FRC-32) (Geobacter daltonii).